A 126-amino-acid chain; its full sequence is Large-conductance mechanosensitive channel (126 aa).

Helical transmembrane passes span 14–34 (VLDLAVGVIIGGAFTGIVKSL) and 69–89 (GAFLNDVINFLITAFVVFLLV).

Belongs to the MscL family. In terms of assembly, homopentamer.

It is found in the cell membrane. Its function is as follows. Channel that opens in response to stretch forces in the membrane lipid bilayer. May participate in the regulation of osmotic pressure changes within the cell. This is Large-conductance mechanosensitive channel from Leuconostoc citreum (strain KM20).